Reading from the N-terminus, the 495-residue chain is UDP-glycosyltransferase 73C13 (495 aa).

The Proton acceptor role is filled by His24. Residue His24 participates in an anthocyanidin binding. Asp129 functions as the Charge relay in the catalytic mechanism. 7 residues coordinate UDP-alpha-D-glucose: Ala356, Gln358, His373, Trp376, Asn377, Ser378, and Glu381. Ala396 is a binding site for an anthocyanidin. Residues Asp397 and Gln398 each coordinate UDP-alpha-D-glucose.

It belongs to the UDP-glycosyltransferase family.

The catalysed reaction is oleanolate + UDP-alpha-D-glucose = oleanolate 3-O-beta-D-glucoside + UDP + H(+). In terms of biological role, catalyzes the transfer of a glucose (Glc) moiety from UDP-Glc to the C-3 position of the oleanane sapogenins oleanolate and hederagenin, and to the C-28 carboxylic group of the lupane sapogenin betulinate. The monoglucosylated hederagenin 3-O-beta-D-glucoside is a feeding deterrent of the yellow-striped flea beetle (Phyllotreta nemorum). This is UDP-glycosyltransferase 73C13 from Barbarea vulgaris (Yellow rocket).